A 307-amino-acid polypeptide reads, in one-letter code: MARANGRSQNLRDKLDGNELDLSLSDLSEVPVRDLVAIPKATALDLSCNKLTTLPDDFCNLSHIVRLDLSKNQIVQLPSEFGRLMNLQHLDLLQNHLMSLPVSFAQLKSLKWLDLKDNPLKPDLAKVAGDCLDEKQCKECAQRVLQYMKSVQSDHEIELQRKLQLDKERKKKLEAKQRVKEEQEREMRKRKKQQQKERKRRDYNAMQEAERALNSNKKAEEEPTENHKRMATPKEKKLAQRQSRLRKIACILLFGLLVVLLVVVACRFTDLKAINMCTSVNAIYKETLSALHSNPVLERFLQDPSSQ.

Residues 1–247 are Cytoplasmic-facing; sequence MARANGRSQN…LAQRQSRLRK (247 aa). LRR repeat units follow at residues 10–31, 40–61, 63–84, 86–107, and 109–131; these read NLRD…SEVP, KATA…FCNL, HIVR…FGRL, NLQH…FAQL, and SLKW…AGDC. Positions 156-222 form a coiled coil; that stretch reads EIELQRKLQL…LNSNKKAEEE (67 aa). The interval 170-238 is disordered; it reads KKKLEAKQRV…RMATPKEKKL (69 aa). Composition is skewed to basic and acidic residues over residues 174–187 and 194–238; these read EAKQ…EREM and QQKE…EKKL. A helical membrane pass occupies residues 248–268; that stretch reads IACILLFGLLVVLLVVVACRF. The Lumenal portion of the chain corresponds to 269 to 307; sequence TDLKAINMCTSVNAIYKETLSALHSNPVLERFLQDPSSQ.

Interacts with SGO1.

The protein resides in the microsome membrane. The protein localises to the endoplasmic reticulum membrane. It localises to the nucleus envelope. Required for nuclear import of FGF1. The polypeptide is Leucine-rich repeat-containing protein 59 (lrrc59) (Xenopus laevis (African clawed frog)).